Reading from the N-terminus, the 337-residue chain is WRKY transcription factor 23 (337 aa).

The disordered stretch occupies residues 100–160 (INPPATPNSS…KNNQKRQREA (61 aa)). The segment covering 106–118 (PNSSSISSASSEA) has biased composition (low complexity). Basic residues predominate over residues 142–155 (HTKKQLKAKKNNQK). The segment at residues 168–233 (SEVDHLEDGY…YEGQHTHISP (66 aa)) is a DNA-binding region (WRKY).

The protein belongs to the WRKY group II-c family.

It is found in the nucleus. Transcription factor. Interacts specifically with the W box (5'-(T)TGAC[CT]-3'), a frequently occurring elicitor-responsive cis-acting element. The chain is WRKY transcription factor 23 (WRKY23) from Arabidopsis thaliana (Mouse-ear cress).